The chain runs to 24 residues: Citropin-3.1.2 (24 aa).

As to expression, expressed by the dorsal and submental skin glands.

The protein localises to the secreted. The polypeptide is Citropin-3.1.2 (Ranoidea citropa (Australian Blue Mountains tree frog)).